Reading from the N-terminus, the 301-residue chain is MNDKKHLGHQAKKRFGQNFLHNDAVISDIVDAINPEPGENLIEIGPGLGALTEPVIERAGKLSVVELDRDLAHRLRHHPFLAKDLTIYETDALKFDFSELATEEQPLRIFGNLPYNISTPLIFHLLTFKDKVKDMHFMLQKEVVERMAAGPHCKAYGRLSIMTQYQCQVFPVMEIGPEAFKPAPKVDSAIVRLIPHAHIENPVKDINALNTVCLAAFNQRRKTIRNTFKKLITEAQLAELNIDANLRPENLSLDEYKKLADFIVDNPPEAAPVKEKRRMAKNKMTEPANNNLNENSAPEVD.

S-adenosyl-L-methionine is bound by residues Asn18, Leu20, Gly45, Glu66, Asp91, and Asn112. The segment at 267–301 is disordered; it reads PPEAAPVKEKRRMAKNKMTEPANNNLNENSAPEVD. Positions 287–301 are enriched in polar residues; the sequence is PANNNLNENSAPEVD.

Belongs to the class I-like SAM-binding methyltransferase superfamily. rRNA adenine N(6)-methyltransferase family. RsmA subfamily.

It localises to the cytoplasm. The enzyme catalyses adenosine(1518)/adenosine(1519) in 16S rRNA + 4 S-adenosyl-L-methionine = N(6)-dimethyladenosine(1518)/N(6)-dimethyladenosine(1519) in 16S rRNA + 4 S-adenosyl-L-homocysteine + 4 H(+). Specifically dimethylates two adjacent adenosines (A1518 and A1519) in the loop of a conserved hairpin near the 3'-end of 16S rRNA in the 30S particle. May play a critical role in biogenesis of 30S subunits. The chain is Ribosomal RNA small subunit methyltransferase A from Colwellia psychrerythraea (strain 34H / ATCC BAA-681) (Vibrio psychroerythus).